An 817-amino-acid polypeptide reads, in one-letter code: Alpha-bisabolene synthase (817 aa).

Asp-566, Asp-570, Asp-713, Thr-717, and Glu-721 together coordinate Mg(2+). The DDXXD motif motif lies at 566–570 (DDMYD).

The protein belongs to the terpene synthase family. Tpsd subfamily. It depends on Mg(2+) as a cofactor. Requires Mn(2+) as cofactor. The cofactor is K(+).

Its subcellular location is the cytoplasm. The enzyme catalyses (2E,6E)-farnesyl diphosphate = (E,R)-alpha-bisabolene + diphosphate. The protein operates within terpene metabolism; oleoresin biosynthesis. Its function is as follows. Converts farnesyl diphosphate to alpha-bisabolene. Involved in defensive oleoresin formation in conifers in response to insect attack or other injury. Involved in sesquiterpene (C15) olefins biosynthesis. The protein is Alpha-bisabolene synthase (ag1) of Abies grandis (Grand fir).